The primary structure comprises 506 residues: Aluminum-activated malate transporter 7 (506 aa).

A run of 6 helical transmembrane segments spans residues 28 to 48, 52 to 72, 78 to 98, 104 to 124, 130 to 150, and 166 to 186; these read VGLVLALVSSFYYYQPLYDSF, AMWAVMTVVVVFEFSVGATLG, VAATLFAGGLGIGAHHLASMS, PILLAVFVFVQAALSTFVRFF, RYDYSLLIFILTFALISVSGF, and VIIGGLSCVIISIFVCPVWAG. The disordered stretch occupies residues 461-485; sequence DDGNNDDTSKNDNGSKEVSIHEKHE. Residues 467–485 are compositionally biased toward basic and acidic residues; sequence DTSKNDNGSKEVSIHEKHE.

It belongs to the aromatic acid exporter (TC 2.A.85) family.

The protein resides in the membrane. Malate transporter. This is Aluminum-activated malate transporter 7 (ALMT7) from Arabidopsis thaliana (Mouse-ear cress).